Consider the following 2845-residue polypeptide: Adenomatous polyposis coli protein (2845 aa).

Position 2 is an N-acetylalanine (alanine 2). A coiled-coil region spans residues 2 to 61 (AAASYDQLLKQVEALKMENSNLRQELEDNSNHLTKLETEASNMKEVLKQLQGSIEDETMT). 2 positions are modified to phosphoserine: serine 105 and serine 109. The stretch at 125 to 245 (SRESTGYLEE…QAAEAERSSQ (121 aa)) forms a coiled coil. The disordered stretch occupies residues 238 to 304 (AEAERSSQSR…THSAPRRLTS (67 aa)). The span at 239–263 (EAERSSQSRHDAASHEAGRQHEGHG) shows a compositional bias: basic and acidic residues. A compositionally biased stretch (polar residues) spans 266 to 279 (ESNTAASSSGQSPA). ARM repeat units follow at residues 451–493 (LMKL…HYSV), 503–545 (LTNL…IASV), 546–589 (LRNL…VLSA), 590–636 (LWNL…GGGI), 637–681 (LRNV…ACGT), 682–723 (LWNL…SAAA), and 724–765 (LRNL…LDAQ). Residues serine 742, serine 746, and serine 778 each carry the phosphoserine modification. Positions 828-873 (VLPSSSSSRGSLDSSRSEKDRSLERERGIGLSAYHPTTENAGTSSK) are disordered. Low complexity predominate over residues 831–841 (SSSSSRGSLDS). The segment covering 842–855 (SRSEKDRSLERERG) has biased composition (basic and acidic residues). The segment covering 862-873 (HPTTENAGTSSK) has biased composition (polar residues). Serine 906 bears the Phosphoserine mark. Disordered regions lie at residues 921–942 (RRSS…ENSN) and 956–986 (RSSN…SYSE). The segment covering 927 to 942 (HTHSNTYNFTKSENSN) has biased composition (polar residues). The span at 959-969 (NDSLNSVTSSD) shows a compositional bias: low complexity. Residues serine 985, serine 1036, and serine 1040 each carry the phosphoserine modification. The tract at residues 1018 to 1168 (ELDTPINYSL…TNYSIKYNEE (151 aa)) is interaction with catenins. 4 disordered regions span residues 1058 to 1079 (IKQN…YSEN), 1092 to 1168 (GQQE…YNEE), 1189 to 1247 (SQKP…GTTC), and 1307 to 1375 (ENDV…PEHY). Composition is skewed to polar residues over residues 1066 to 1078 (ARSQ…VYSE) and 1103 to 1128 (RGTS…QSLC). Over residues 1189–1204 (SQKPSFSFSKNSSAQS) the composition is skewed to low complexity. Residues 1211–1245 (SPSSENTAVPPSNAKRQNQLRPSSAQRNGQTQKGT) show a composition bias toward polar residues. Over residues 1354–1365 (SSGAKSPSKSGA) the composition is skewed to low complexity. A phosphoserine mark is found at serine 1359, serine 1370, serine 1384, serine 1391, and serine 1394. Disordered stretches follow at residues 1400–1474 (IASS…VNAA), 1525–1568 (PPVQ…SDDD), 1587–1606 (RKAK…VARK), 1746–2010 (DQVQ…APKS), and 2042–2069 (ISSA…KVGG). Threonine 1437 is subject to Phosphothreonine. The segment covering 1447 to 1465 (AKREVPKSKVPAAEKRESG) has biased composition (basic and acidic residues). Residues 1532–1546 (NGNETESEQPEESNE) are compositionally biased toward acidic residues. The span at 1547 to 1562 (NQDKEVEKPDSEKDLL) shows a compositional bias: basic and acidic residues. At serine 1565 the chain carries Phosphoserine. Residues 1747–1762 (QVQQASSTSSGANKNQ) are compositionally biased toward polar residues. Serine 1772 is subject to Phosphoserine. Residues 1783-1792 (YRTRVRKNTD) are compositionally biased toward basic and acidic residues. Serine 1859, serine 1861, and serine 1862 each carry phosphoserine. A highly charged region spans residues 1864–1891 (DFDDDDVDLSREKAELRKGKESKDSEAK). The span at 1871–1894 (DLSREKAELRKGKESKDSEAKVTC) shows a compositional bias: basic and acidic residues. Over residues 1900-1911 (SSQQAASKSQAS) the composition is skewed to low complexity. Positions 1927 to 1936 (KQPTFPQSSK) are enriched in polar residues. A compositionally biased stretch (basic and acidic residues) spans 1937 to 1949 (DGPDRGAATDEKL). Serine 1969 and serine 1971 each carry phosphoserine. A compositionally biased stretch (basic and acidic residues) spans 1979-1990 (NNKESEPIKEAE). Positions 2034–2058 (EDDLLQECISSAMPKKKRPSRLKSE) are interaction with AXIN1. Phosphoserine is present on residues serine 2087, serine 2092, serine 2125, serine 2129, serine 2130, and serine 2132. Disordered stretches follow at residues 2146–2190 (SPFH…GIKG), 2202–2652 (KIRS…PPVS), and 2664–2845 (CPIN…VTSV). The residue at position 2151 (threonine 2151) is a Phosphothreonine. The interval 2167–2674 (ILKPGEKSTL…PINNPRSGRS (508 aa)) is basic region. The span at 2169–2187 (KPGEKSTLEAKKIESENKG) shows a compositional bias: basic and acidic residues. Composition is skewed to polar residues over residues 2203–2223 (IRSN…NMPS) and 2257–2272 (ASKS…TSPR). 3 positions are modified to phosphoserine: serine 2260, serine 2270, and serine 2283. Residues 2290–2311 (SQISGSNKGSSRSGSRDSTPSR) show a composition bias toward low complexity. Over residues 2312-2331 (PTQQPLSRPMQSPGRNSISP) the composition is skewed to polar residues. The segment covering 2348-2369 (TSSPSTASTKSSGSGKMSYTSP) has biased composition (low complexity). Polar residues predominate over residues 2370 to 2411 (GRQLSQQNLTKQASLSKNASSIPRSESASKGLNQMSNGNGSN). Composition is skewed to low complexity over residues 2417–2429 (SRMS…GSES) and 2459–2477 (SASF…PTRS). 2 positions are modified to phosphoserine: serine 2473 and serine 2535. An interaction with DLG1 region spans residues 2475-2845 (TRSQAQTPVL…HSGSYLVTSV (371 aa)). Residues 2518–2535 (NDGRPTKRHDIARSHSES) are compositionally biased toward basic and acidic residues. Positions 2555–2568 (SSSLPRVSTWRRTG) are enriched in polar residues. Serine 2569 bears the Phosphoserine mark. The span at 2569 to 2579 (SSSSILSASSE) shows a compositional bias: low complexity. Over residues 2580 to 2592 (SSEKAKSEDERHV) the composition is skewed to basic and acidic residues. Over residues 2626–2638 (ASQSASSGAASGA) the composition is skewed to low complexity. Positions 2668–2679 (NPRSGRSPTGNT) are enriched in polar residues. Serine 2671 and serine 2674 each carry phosphoserine. Residues 2674 to 2845 (SPTGNTPPVI…HSGSYLVTSV (172 aa)) are interaction with MAPRE1. Residue threonine 2679 is modified to Phosphothreonine. Over residues 2684–2694 (DSVSEKGSSSI) the composition is skewed to low complexity. A compositionally biased stretch (basic and acidic residues) spans 2695 to 2705 (KDSKDSKDTHG). The span at 2706-2716 (KQSVGSGSPVQ) shows a compositional bias: polar residues. Residues serine 2713 and serine 2726 each carry the phosphoserine modification. Residues 2765 to 2776 (SSSSSSKHSSPS) show a composition bias toward low complexity. The segment covering 2786-2814 (FNYNPSPRKSSADSTSARPSQIPTPVSTN) has biased composition (polar residues). Residue serine 2791 is modified to Phosphoserine. Positions 2805–2808 (SQIP) match the Microtubule tip localization signal motif. The PDZ-binding signature appears at 2843–2845 (TSV).

This sequence belongs to the adenomatous polyposis coli (APC) family. Forms homooligomers. Found in a complex consisting of ARHGEF4, APC and CTNNB1. Found in a complex composed of MACF1, APC, AXIN1, CTNNB1 and GSK3B. The complex composed, at least, of APC, CTNNB1 and GSK3B interacts with JPT1; the interaction requires the inactive form of GSK3B (phosphorylated at 'Ser-9'). Interacts with APC2. Interacts with DLG1 (via PDZ domains) and DLG3 (via PDZ domains). Interacts with alpha- and beta-catenins. Interacts with AXIN1 (via RGS domain). Interacts with ARHGEF4 (via N-terminus). Interacts (via C-terminal residues 2674-2843) with MAPRE1 (via C-terminal residues 206-211); the interaction inhibits association with and bundling of F-actin. Interacts with MAPRE2 and MAPRE3 (via C-terminus). Interacts with DIAPH1; DIAPH1 acts as a scaffold protein for MAPRE1 and APC to stabilize microtubules and promote cell migration. Interacts with DIAPH2. Interacts with SCRIB; may mediate targeting to adherens junctions of epithelial cells. Interacts with SPATA13 (via N-terminus and SH3 domain). Interacts with ASAP1 (via SH3 domain). Interacts (at the cell membrane) with AMER1 and AMER2 (via ARM repeats). Interacts with KHDRBS1. Interacts with actin; binds both to F-actin and actin filament bundles. Post-translationally, phosphorylated; phosphorylation enhances the F-actin bundling activity. Phosphorylated by GSK3B. Ubiquitinated, leading to its degradation by the proteasome. Ubiquitination is facilitated by Axin. Deubiquitinated by ZRANB1/TRABID. Expressed in liver, spleen, kidney, heart, lung, brain, stomach, intestine, testis and ovary.

The protein localises to the cell junction. The protein resides in the adherens junction. Its subcellular location is the cytoplasm. It is found in the cytoskeleton. It localises to the cell projection. The protein localises to the lamellipodium. The protein resides in the ruffle membrane. Its subcellular location is the cell membrane. Its function is as follows. Tumor suppressor. Promotes rapid degradation of CTNNB1 and participates in Wnt signaling as a negative regulator. APC activity is correlated with its phosphorylation state. Activates the GEF activity of SPATA13 and ARHGEF4. Plays a role in hepatocyte growth factor (HGF)-induced cell migration. Required for MMP9 up-regulation via the JNK signaling pathway in colorectal tumor cells. Associates with both microtubules and actin filaments, components of the cytoskeleton. Plays a role in mediating the organization of F-actin into ordered bundles. Functions downstream of Rho GTPases and DIAPH1 to selectively stabilize microtubules. Acts as a mediator of ERBB2-dependent stabilization of microtubules at the cell cortex. It is required for the localization of MACF1 to the cell membrane and this localization of MACF1 is critical for its function in microtubule stabilization. The chain is Adenomatous polyposis coli protein (Apc) from Mus musculus (Mouse).